We begin with the raw amino-acid sequence, 402 residues long: Lipid-A-disaccharide synthase (402 aa).

Belongs to the LpxB family.

The catalysed reaction is a lipid X + a UDP-2-N,3-O-bis[(3R)-3-hydroxyacyl]-alpha-D-glucosamine = a lipid A disaccharide + UDP + H(+). The protein operates within bacterial outer membrane biogenesis; LPS lipid A biosynthesis. In terms of biological role, condensation of UDP-2,3-diacylglucosamine and 2,3-diacylglucosamine-1-phosphate to form lipid A disaccharide, a precursor of lipid A, a phosphorylated glycolipid that anchors the lipopolysaccharide to the outer membrane of the cell. In Cupriavidus pinatubonensis (strain JMP 134 / LMG 1197) (Cupriavidus necator (strain JMP 134)), this protein is Lipid-A-disaccharide synthase.